A 671-amino-acid chain; its full sequence is Receptor-interacting serine/threonine-protein kinase 1 (671 aa).

Residue Ser6 is modified to Phosphoserine; by IKKA and IKKB. A Protein kinase domain is found at 17–289; that stretch reads FLESAELDSG…GIEEKFRPFY (273 aa). Ser20 carries the post-translational modification Phosphoserine; by autocatalysis. ATP is bound by residues 23-31 and Lys45; that span reads LDSGGFGKV. Ser25 bears the Phosphoserine; by IKKA and IKKB mark. The active-site Proton acceptor is the Asp138. A Phosphoserine; by RIPK3 and autocatalysis modification is found at Ser161. A Phosphoserine; by autocatalysis modification is found at Ser166. Positions 290–582 are interaction with SQSTM1; that stretch reads LSQLEESVEE…QAIFDNTTSL (293 aa). Ser303 carries the post-translational modification Phosphoserine. Phosphoserine; by MAP3K7 occurs at positions 320, 331, and 333. Positions 331 to 348 are enriched in polar residues; the sequence is SRSNSATEQPGSLHSSQG. The tract at residues 331-354 is disordered; sequence SRSNSATEQPGSLHSSQGLGMGPV. Lys377 participates in a covalent cross-link: Glycyl lysine isopeptide (Lys-Gly) (interchain with G-Cter in ubiquitin). Tyr384 is modified (phosphotyrosine). A disordered region spans residues 389 to 455; that stretch reads SRMDRQTKQQ…GNAVHQPSGL (67 aa). Polar residues predominate over residues 428-444; it reads NFQNTEGKGTAYSSAAS. An RIP homotypic interaction motif (RHIM) motif is present at residues 531 to 547; sequence YTIYNSTGIQIGAYNYM. The Death domain occupies 583-669; sequence TDKHLDPIRE…DLLSSLIYVS (87 aa). Arg603 is a glycosylation site ((Microbial infection) N-beta-linked (GlcNAc) arginine).

This sequence belongs to the protein kinase superfamily. TKL Ser/Thr protein kinase family. Homodimer. Interacts (via RIP homotypic interaction motif) with RIPK3 (via RIP homotypic interaction motif); this interaction induces RIPK1 phosphorylation and formation of a RIPK1-RIPK3 necroptosis-inducing complex. Upon TNF-induced necrosis, the RIPK1-RIPK3 dimer further interacts with PGAM5 and MLKL; the formation of this complex leads to PGAM5 phosphorylation and increase in PGAM5 phosphatase activity. Interacts (via the death domain) with TNFRSF6 (via the death domain) and TRADD (via the death domain). Is recruited by TRADD to TNFRSF1A in a TNF-dependent process. Binds RNF216, EGFR, IKBKG, TRAF1, TRAF2 and TRAF3. Interacts with BNLF1. Interacts with SQSTM1 upon TNF-alpha stimulation. May interact with MAVS/IPS1. Interacts with ZFAND5. Interacts with RBCK1. Interacts with ZBP1. Interacts with BIRC2/c-IAP1, BIRC3/c-IAP2 and XIAP/BIRC4. Interacts (via kinase domain) with DAB2IP (via Ras-GAP domain); the interaction occurs in a TNF-alpha-dependent manner. Interacts with ARHGEF2. Interacts (via protein kinase domain) with RFFL; involved in RIPK1 ubiquitination. Interacts with RNF34; involved in RIPK1 ubiquitination. Interacts with TICAM1 and this interaction is enhanced in the presence of WDFY1. Interacts with PELI1. Interacts (via death domain) with CRADD (via death domain); the interaction is direct. Component of complex IIa composed of at least RIPK1, FADD and CASP8. Component of the AIM2 PANoptosome complex, a multiprotein complex that drives inflammatory cell death (PANoptosis). Interacts with MAP3K7, CFLAR, CASP8, FADD and NEMO. Interacts with TAX1BP1; this interaction negatively regulates RIPK1 ubiquitination. Interacts with GRB2. Interacts with DDX24; this interaction disrupts RLR signaling activation of IFN-dependent transcription factor IRF7. In terms of assembly, (Microbial infection) Interacts with mumps virus protein SH; this interaction inhibits downstream NF-kappa-B pathway activation. As to quaternary structure, (Microbial infection) Interacts with Murid herpesvirus 1 protein RIR1. (Microbial infection) Interacts (via RIP homotypic interaction motif) with herpes simplex virus 1/HHV-1 protein RIR1/ICP6 (via RIP homotypic interaction motif); this interaction prevents necroptosis activation. In terms of assembly, (Microbial infection) Interacts (via RIP homotypic interaction motif) with herpes simplex virus 2/HHV-2 protein RIR1/ICP10 (via RIP homotypic interaction motif); this interaction prevents necroptosis activation. In terms of processing, (Microbial infection) Proteolytically cleaved by S.flexneri OspD3 within the RIP homotypic interaction motif (RHIM), leading to its degradation and inhibition of necroptosis. Proteolytically cleaved by CASP8 at Asp-324. Cleavage is crucial for limiting TNF-induced apoptosis, necroptosis and inflammatory response. Cleavage abolishes NF-kappa-B activation and enhances the interaction of TRADD with FADD. Proteolytically cleaved by CASP6 during intrinsic apoptosis. Post-translationally, RIPK1 and RIPK3 undergo reciprocal auto- and trans-phosphorylation. Phosphorylation of Ser-161 by RIPK3 is necessary for the formation of the necroptosis-inducing complex. Phosphorylation at Ser-25 represses its kinase activity and consequently prevents TNF-mediated RIPK1-dependent cell death. Phosphorylated at Ser-320 by MAP3K7 which requires prior ubiquitination with 'Lys-63'-linked chains by BIRC2/c-IAP1 and BIRC3/c-IAP2. This phosphorylation positively regulates RIPK1 interaction with RIPK3 to promote necroptosis but negatively regulates RIPK1 kinase activity and its interaction with FADD to mediate apoptosis. In terms of processing, deubiquitinated by USP7; this modification is required for TNF-alpha-induced apoptosis. Ubiquitinated with 'Lys-11'-, 'Lys-48'-, 'Lys-63'- and linear-linked type ubiquitin. Polyubiquitination with 'Lys-63'-linked chains by TRAF2 induces association with the IKK complex. Deubiquitination of 'Lys-63'-linked chains and polyubiquitination with 'Lys-48'-linked chains by TNFAIP3 leads to RIPK1 proteasomal degradation and consequently down-regulates TNF-alpha-induced NF-kappa-B signaling. 'Lys-48'-linked polyubiquitination by RFFL or RNF34 also promotes proteasomal degradation and negatively regulates TNF-alpha-induced NF-kappa-B signaling. Linear polyubiquitinated; the head-to-tail linear polyubiquitination ('Met-1'-linked) is mediated by the LUBAC complex and decreases protein kinase activity. Deubiquitination of linear polyubiquitin by CYLD promotes the kinase activity. Polyubiquitinated with 'Lys-48' and 'Lys-63'-linked chains by BIRC2/c-IAP1 and BIRC3/c-IAP2, leading to activation of NF-kappa-B. Ubiquitinated with 'Lys-63'-linked chains by PELI1. Ubiquitination at Lys-377 with 'Lys-63'-linked chains by BIRC2/c-IAP1 and BIRC3/c-IAP2 is essential for its phosphorylation at Ser-320 mediated by MAP3K7. This ubiquitination is required for NF-kB activation, suppresses RIPK1 kinase activity and plays a critical role in preventing cell death during embryonic development. Post-translationally, (Microbial infection) Glycosylated at Arg-603 by enteropathogenic E.coli protein NleB1: arginine GlcNAcylation prevents homotypic/heterotypic death domain interactions.

Its subcellular location is the cytoplasm. It is found in the cell membrane. The enzyme catalyses L-seryl-[protein] + ATP = O-phospho-L-seryl-[protein] + ADP + H(+). It catalyses the reaction L-threonyl-[protein] + ATP = O-phospho-L-threonyl-[protein] + ADP + H(+). With respect to regulation, serine-threonine kinase activity is inhibited by linear polyubiquitination ('Met-1'-linked) by the LUBAC complex. Inhibited by necrostatins, including necrostatin-1, necrostatin-3 and necrostatin-4. Serine-threonine kinase which is a key regulator of TNF-mediated apoptosis, necroptosis and inflammatory pathways. Exhibits kinase activity-dependent functions that regulate cell death and kinase-independent scaffold functions regulating inflammatory signaling and cell survival. Has kinase-independent scaffold functions: upon binding of TNF to TNFR1, RIPK1 is recruited to the TNF-R1 signaling complex (TNF-RSC also known as complex I) where it acts as a scaffold protein promoting cell survival, in part, by activating the canonical NF-kappa-B pathway. Kinase activity is essential to regulate necroptosis and apoptosis, two parallel forms of cell death: upon activation of its protein kinase activity, regulates assembly of two death-inducing complexes, namely complex IIa (RIPK1-FADD-CASP8), which drives apoptosis, and the complex IIb (RIPK1-RIPK3-MLKL), which drives necroptosis. RIPK1 is required to limit CASP8-dependent TNFR1-induced apoptosis. In normal conditions, RIPK1 acts as an inhibitor of RIPK3-dependent necroptosis, a process mediated by RIPK3 component of complex IIb, which catalyzes phosphorylation of MLKL upon induction by ZBP1. Inhibits RIPK3-mediated necroptosis via FADD-mediated recruitment of CASP8, which cleaves RIPK1 and limits TNF-induced necroptosis. Required to inhibit apoptosis and necroptosis during embryonic development: acts by preventing the interaction of TRADD with FADD thereby limiting aberrant activation of CASP8. In addition to apoptosis and necroptosis, also involved in inflammatory response by promoting transcriptional production of pro-inflammatory cytokines, such as interleukin-6 (IL6). Phosphorylates RIPK3: RIPK1 and RIPK3 undergo reciprocal auto- and trans-phosphorylation. Phosphorylates DAB2IP at 'Ser-728' in a TNF-alpha-dependent manner, and thereby activates the MAP3K5-JNK apoptotic cascade. Required for ZBP1-induced NF-kappa-B activation in response to DNA damage. This Homo sapiens (Human) protein is Receptor-interacting serine/threonine-protein kinase 1.